A 908-amino-acid polypeptide reads, in one-letter code: Flap endonuclease GEN homolog 1 (908 aa).

The tract at residues Gly-2–Pro-96 is XPG-N domain. 7 residues coordinate Mg(2+): Asp-30, Glu-75, Glu-134, Glu-136, Asp-155, Asp-157, and Asp-208. The tract at residues Glu-122–Asp-208 is XPG-I domain. The tract at residues Asp-208–Met-383 is 5'-3' exonuclease domain. A chromodomain region spans residues Gly-389–Lys-463. 4 disordered regions span residues Ser-460–Ala-482, Tyr-629–Pro-650, Arg-792–Arg-834, and Ala-853–Asn-886. Residues Arg-465–Gly-476 are compositionally biased toward basic residues. Phosphoserine occurs at positions 794 and 795. The span at His-824–Arg-834 shows a compositional bias: basic and acidic residues.

This sequence belongs to the XPG/RAD2 endonuclease family. GEN subfamily. Largely monomeric, dimerizes on the Holliday junction and the first nick occurs upon dimerization at the junction. Requires Mg(2+) as cofactor. In terms of tissue distribution, expressed in bone marrow and testis and to a lesser extent in thymus, spleen, brain and colon.

Its subcellular location is the nucleus. In terms of biological role, endonuclease which resolves Holliday junctions (HJs) by the introduction of symmetrically related cuts across the junction point, to produce nicked duplex products in which the nicks can be readily ligated. Four-way DNA intermediates, also known as Holliday junctions, are formed during homologous recombination and DNA repair, and their resolution is necessary for proper chromosome segregation. Cleaves HJs by a nick and counter-nick mechanism involving dual coordinated incisions that lead to the formation of ligatable nicked duplex products. Cleavage of the first strand is rate limiting, while second strand cleavage is rapid. Largely monomeric, dimerizes on the HJ and the first nick occurs upon dimerization at the junction. Efficiently cleaves both single and double HJs contained within large recombination intermediates. Exhibits a weak sequence preference for incision between two G residues that reside in a T-rich region of DNA. Also has endonuclease activity on 5'-flap and replication fork (RF) DNA substrates. This is Flap endonuclease GEN homolog 1 (Gen1) from Mus musculus (Mouse).